The primary structure comprises 528 residues: GMP synthase [glutamine-hydrolyzing] (528 aa).

The Glutamine amidotransferase type-1 domain maps to 13-204 (SILILDFGSQ…VYKISCCAAD (192 aa)). Cysteine 90 serves as the catalytic Nucleophile. Active-site residues include histidine 178 and glutamate 180. In terms of domain architecture, GMPS ATP-PPase spans 205–403 (WTTETYIEET…LGLPAEIIKR (199 aa)). 232–238 (SGGVDSS) provides a ligand contact to ATP.

Homodimer.

It catalyses the reaction XMP + L-glutamine + ATP + H2O = GMP + L-glutamate + AMP + diphosphate + 2 H(+). Its pathway is purine metabolism; GMP biosynthesis; GMP from XMP (L-Gln route): step 1/1. In terms of biological role, catalyzes the synthesis of GMP from XMP. In Prochlorococcus marinus (strain MIT 9215), this protein is GMP synthase [glutamine-hydrolyzing].